Reading from the N-terminus, the 825-residue chain is MDDDGLLINFEVGEGPIKPQIKFTGGRWRERNRLQRSVKRGLTGSQSNDAVADDVGPAPAKRQRLSEGAAPEIQRRFRPQAQGPRSQHVSSRLFTSNPTPVTNFDEPETAPAEEPAEPALPSNAPLSDEAATFAALGLSRRIAQHLSAKLELKAPTAIQHRAVPHLVTTDEDAFLQAQTGSGKTLAYLLPIVNRILALNQNEDGTISKDASKKIHRNSGLLAIVLAPTRELCKQIATVLEKLLRCAPWIVSTTVIGGESKHSEKARIRKGINILIATPGRLKDHLDNTKVLDVSLARWLILDEGDRMMEMGFMDDLKEIVSKMREAPLKKINPDGIQLEPALPTRRVTVLCSATLDHAQVRRLGEYSLEADKTELIKVDGTEAAKEGDEASEAVFAAPSQLKQSYLVVPAKLRLVTLIALLKSSFARRGSVMKAIIFISCADSVDFHFDLLRSPIKEPKEAAAPPTPKKAPKDAGETPDTPPKETKPTKPVTNHTESTVGKACYITSAANTTITLHKLHGSLAQPVRTATLDSFSKSKDPSILITTDISSRGLDVPAVDLVIEYDPAFAVADHVHRIGRTARAGRPGKAVLFLQPGSEEGYVGLLQKNASTALTPQLYDSVLQAGFSSNIDLPPVTATNEDGQDTEQQKQLDSRKQTWTSRAEALQLHLEQRLLASDASSQASNNSGKGFNSKKGASTKLGKPAPKSSDGATGTLLASGRQAFRSHIRAYATHVRDERVYFDMTQLHLGHMAKAFGLREAPGGIGAGVQRRTVKPSAANGGGKKSTKGDDGDGLDKQDDDEAERTRRMKKMMRMVGAGASEFNIG.

Positions 21–125 (IKFTGGRWRE…AEPALPSNAP (105 aa)) are disordered. Positions 49-60 (DAVADDVGPAPA) are enriched in low complexity. Over residues 83 to 102 (GPRSQHVSSRLFTSNPTPVT) the composition is skewed to polar residues. The segment covering 109 to 125 (TAPAEEPAEPALPSNAP) has biased composition (low complexity). The short motif at 131 to 160 (ATFAALGLSRRIAQHLSAKLELKAPTAIQH) is the Q motif element. The region spanning 164 to 373 (PHLVTTDEDA…GEYSLEADKT (210 aa)) is the Helicase ATP-binding domain. 177–184 (AQTGSGKT) serves as a coordination point for ATP. Positions 302 to 305 (DEGD) match the DEAD box motif. Positions 400 to 625 (QLKQSYLVVP…QLYDSVLQAG (226 aa)) constitute a Helicase C-terminal domain. 4 disordered regions span residues 457 to 495 (EPKEAAAPPTPKKAPKDAGETPDTPPKETKPTKPVTNHT), 632 to 657 (LPPVTATNEDGQDTEQQKQLDSRKQT), 676 to 713 (SDASSQASNNSGKGFNSKKGASTKLGKPAPKSSDGATG), and 764 to 825 (IGAG…FNIG). Composition is skewed to basic and acidic residues over residues 470-487 (APKDAGETPDTPPKETKP) and 646-655 (EQQKQLDSRK). Over residues 676–686 (SDASSQASNNS) the composition is skewed to low complexity. Residues 786–796 (TKGDDGDGLDK) are compositionally biased toward basic and acidic residues.

The protein belongs to the DEAD box helicase family. DDX31/DBP7 subfamily.

The protein resides in the nucleus. The protein localises to the nucleolus. It catalyses the reaction ATP + H2O = ADP + phosphate + H(+). In terms of biological role, ATP-binding RNA helicase involved in the biogenesis of 60S ribosomal subunits and is required for the normal formation of 25S and 5.8S rRNAs. In Pyricularia oryzae (strain 70-15 / ATCC MYA-4617 / FGSC 8958) (Rice blast fungus), this protein is ATP-dependent RNA helicase DBP7 (DBP7).